The following is a 470-amino-acid chain: Low molecular weight neuronal intermediate filament (470 aa).

The head stretch occupies residues 1-91; it reads MTSRELYTSS…KIVRTNEKEQ (91 aa). In terms of domain architecture, IF rod spans 88 to 399; the sequence is EKEQLQGLND…KLLEGEETRL (312 aa). The coil 1A stretch occupies residues 91 to 123; that stretch reads QLQGLNDRFVTYIEKVHHLEQQNKLLESEVTLL. The interval 121–136 is linker 1; that stretch reads TLLRQKHSEPSRLSHI. The coil 1B stretch occupies residues 137-232; that stretch reads YEQEIRELRS…KVHEEEIAEL (96 aa). The linker 12 stretch occupies residues 233 to 251; the sequence is QASVQEAQISVEMDVVSKP. The interval 252–270 is coil 2A; sequence DLTAALKEIRMQYEVLSAR. The linker 2 stretch occupies residues 271–279; it reads NQQSSEEWY. The interval 280-395 is coil 2B; it reads QAKIANVSLE…AAYRKLLEGE (116 aa). Residues 396–470 form a tail region; it reads ETRLTSVGGG…EKISQKAAAN (75 aa). Over residues 414-431 the composition is skewed to low complexity; it reads FSSGSYSGGRSSTTSTIS. The segment at 414–470 is disordered; the sequence is FSSGSYSGGRSSTTSTISIRKEEKKESPEGGKGGSSGQPKTSKPGDQEKISQKAAAN. Residues 432 to 442 show a composition bias toward basic and acidic residues; that stretch reads IRKEEKKESPE.

It belongs to the intermediate filament family. Nervous system; in axons in the PNS and in small perikarya in the dorsal root ganglion.

This chain is Low molecular weight neuronal intermediate filament, found in Xenopus laevis (African clawed frog).